A 447-amino-acid chain; its full sequence is MRLIQALSLCLALSLSLAAPPQHKEDHSHKGKPGGEGHKHELHHGAQLDRCKGIEFDAVAVNEEGVPYFFKGDHLFKGFHGKAELSNKTFPELDDHHHLGHVDAAFRMHSEDSPDHHDHQFFFLDNMVFSYFKHKLEKDYPKLISAVFPGIPDHLDAAVECPKPDCPNDTVIFFKGDEIYHFNMHTKKVDEKEFKSMPNCTGAFRYMGHYYCFHGHQFSKFDPMTGEVHGKYPKEARDYFMRCPHFGSKTTDDHIEREQCSRVHLDAITSDDAGNIYAFRGHHFLSITGDKFHSDTIESEFKELHSEVDSVFSYDGHFYMIKDNDVFVYKVGKPHTHLEGYPKPLKDVLGIEGPVDAAFVCEDHHVVHIIKGQSIYDVDLKATPRKLVKEGTITQFKRIDAAMCGPKGVTVVIGNHFYNYDSVQVMLMAKIMPEQQKVSQQLFGCDH.

The signal sequence occupies residues 1–18 (MRLIQALSLCLALSLSLA). The disordered stretch occupies residues 20 to 44 (PPQHKEDHSHKGKPGGEGHKHELHH). Residues 22–44 (QHKEDHSHKGKPGGEGHKHELHH) are compositionally biased toward basic and acidic residues. 8 Hemopexin repeats span residues 53 to 93 (GIEF…FPEL), 99 to 151 (LGHV…FPGI), 152 to 197 (PDHL…FKSM), 198 to 243 (PNCT…FMRC), 262 to 304 (RVHL…FKEL), 305 to 351 (HSEV…VLGI), 352 to 395 (EGPV…TITQ), and 396 to 441 (FKRI…VSQQ). Asparagine 87 carries an N-linked (GlcNAc...) asparagine glycan. N-linked (GlcNAc...) asparagine glycosylation is found at asparagine 168 and asparagine 199. Residue histidine 293 participates in heme binding.

Belongs to the hemopexin family.

It localises to the secreted. Functionally, binds heme and transports it to the liver for breakdown and iron recovery, after which the free hemopexin returns to the circulation. This is Hemopexin from Danio rerio (Zebrafish).